The chain runs to 206 residues: Probable N-acetyltransferase 14 (206 aa).

The N-acetyltransferase domain maps to 9-206 (LSVREMREEE…TIVQEFRKDI (198 aa)). The next 2 membrane-spanning stretches (helical) occupy residues 37 to 57 (LILY…ASSG) and 60 to 80 (FILN…IVGL).

The protein belongs to the camello family.

It is found in the membrane. In terms of biological role, probable acetyltransferase. This is Probable N-acetyltransferase 14 (nat14) from Xenopus tropicalis (Western clawed frog).